Here is a 445-residue protein sequence, read N- to C-terminus: Histamine H3 receptor (445 aa).

The Extracellular portion of the chain corresponds to 1–40 (MERAPPDGLMNASGALAGEAAAAAGGARTFSAAWTAVLAA). The N-linked (GlcNAc...) asparagine glycan is linked to asparagine 11. The chain crosses the membrane as a helical span at residues 41 to 61 (LMALLIVATVLGNALVMLAFV). Topologically, residues 62–71 (ADSSLRTQNN) are cytoplasmic. A helical transmembrane segment spans residues 72–92 (FFLLNLAISDFLVGVFCIPLY). The Extracellular portion of the chain corresponds to 93–109 (VPYVLTGRWTFGRGLCK). Cysteine 108 and cysteine 189 are oxidised to a cystine. Residues 110–130 (LWLVVDYLLCTSSVFNIVLIS) traverse the membrane as a helical segment. The Cytoplasmic segment spans residues 131–157 (YDRFLSVTRAVSYRAQQGDTRRAVRKM). The helical transmembrane segment at 158-178 (VLVWVLAFLLYGPAILSWEYL) threads the bilayer. At 179–197 (SGGSSIPEGHCYAEFFYNW) the chain is on the extracellular side. The helical transmembrane segment at 198–218 (YFLITASTLEFFTPFLSVTFF) threads the bilayer. At 219–359 (NLSIYLNIQR…LSRDKKVAKS (141 aa)) the chain is on the cytoplasmic side. Disordered regions lie at residues 236 to 264 (GGAREAGPDPLPEAQSSPPQPPPGCWGCW) and 288 to 336 (AGEA…LEKR). Low complexity predominate over residues 299-312 (AAASPTSSSGSSSR). A helical membrane pass occupies residues 360–380 (LAIIVSIFGLCWAPYTLLMII). At 381–398 (RAACHGHCVPDYWYETSF) the chain is on the extracellular side. The chain crosses the membrane as a helical span at residues 399–419 (WLLWANSAVNPVLYPLCHYSF). The Cytoplasmic segment spans residues 420–445 (RRAFTKLLCPQKLKVQPHSSLEHCWK). Residue serine 439 is modified to Phosphoserine.

This sequence belongs to the G-protein coupled receptor 1 family. As to expression, expressed widely and abundantly throughout the brain. Highly expressed in discrete neuronal populations such as pyramidal cells in cerebral cortex or cerebellar Purkinje cells.

The protein localises to the cell membrane. The H3 subclass of histamine receptors could mediate the histamine signals in CNS and peripheral nervous system. Signals through the inhibition of adenylate cyclase and displays high constitutive activity (spontaneous activity in the absence of agonist). The polypeptide is Histamine H3 receptor (HRH3) (Cavia porcellus (Guinea pig)).